The chain runs to 259 residues: Dihydroorotate dehydrogenase B (NAD(+)), electron transfer subunit (259 aa).

An FAD-binding FR-type domain is found at M1–V101. Residues R52–S55, I69–R71, and G76–T77 each bind FAD. [2Fe-2S] cluster is bound by residues C223, C228, C231, and C245.

Belongs to the PyrK family. As to quaternary structure, heterotetramer of 2 PyrK and 2 PyrD type B subunits. [2Fe-2S] cluster serves as cofactor. Requires FAD as cofactor.

It participates in pyrimidine metabolism; UMP biosynthesis via de novo pathway; orotate from (S)-dihydroorotate (NAD(+) route): step 1/1. In terms of biological role, responsible for channeling the electrons from the oxidation of dihydroorotate from the FMN redox center in the PyrD type B subunit to the ultimate electron acceptor NAD(+). This is Dihydroorotate dehydrogenase B (NAD(+)), electron transfer subunit from Fusobacterium nucleatum subsp. nucleatum (strain ATCC 25586 / DSM 15643 / BCRC 10681 / CIP 101130 / JCM 8532 / KCTC 2640 / LMG 13131 / VPI 4355).